The sequence spans 69 residues: uncharacterized protein (69 aa).

This is an uncharacterized protein from Acheta domesticus (House cricket).